Consider the following 1820-residue polypeptide: Afadin (1820 aa).

The 95-residue stretch at 39-133 folds into the Ras-associating 1 domain; the sequence is FHGVMRFYFQ…GRFVLKNEND (95 aa). Positions 129–196 are disordered; sequence KNENDAIPAK…PSQGDDSENS (68 aa). Positions 146 to 186 form a coiled coil; the sequence is EKQEKEGVIQNFKRTLSKKEKKEKKKKEKEALRQASDKEER. The span at 160-172 shows a compositional bias: basic residues; it reads TLSKKEKKEKKKK. The span at 173 to 189 shows a compositional bias: basic and acidic residues; that stretch reads EKEALRQASDKEERPSQ. Phosphoserine is present on residues S216, S246, and S256. Residues 246 to 348 form the Ras-associating 2 domain; sequence SGGTLRIYAD…LVFQLKRRPP (103 aa). Over residues 356–371 the composition is skewed to basic and acidic residues; that stretch reads KKHVEGKSLKGKDRAD. A disordered region spans residues 356-377; the sequence is KKHVEGKSLKGKDRADGSGYGS. Residues S391 and S424 each carry the phosphoserine modification. The FHA domain maps to 426-492; the sequence is TEVGTEKFDD…LQSGMRLQFG (67 aa). Phosphoserine is present on residues S512, S557, S562, S655, S1083, S1107, S1126, S1140, S1143, S1172, S1173, S1182, and S1199. Residues 538-569 form a disordered region; sequence GDVHSGTALPASRSTTRLDSDRVSSASSTAER. In terms of domain architecture, Dilute spans 653-908; sequence DISPTERTHK…IENVVAVAEN (256 aa). In terms of domain architecture, PDZ spans 1007–1093; that stretch reads IITVTLKKQN…VVTLEVAKQG (87 aa). Residues 1107 to 1194 form a disordered region; sequence SPMMQRISDR…GKGPYTSGTA (88 aa). Positions 1113–1128 are enriched in basic and acidic residues; sequence ISDRRGSGKPRPKSEG. A compositionally biased stretch (polar residues) spans 1132–1143; it reads YNNSAQNGSPES. The segment covering 1152-1172 has biased composition (basic and acidic residues); the sequence is SEPKKLPGDDRLMKNRADHRS. Residues 1203-1222 form a disordered region; sequence GNLCTEEQSPPPRPEAYPIP. T1232 bears the Phosphothreonine mark. Disordered stretches follow at residues 1235-1278, 1308-1527, and 1567-1716; these read ASKS…SQEE, QSSS…KQQQ, and RLQE…LKTQ. Residue S1238 is modified to Phosphoserine. The span at 1252-1262 shows a compositional bias: basic and acidic residues; it reads YEEKPHVHTES. Residue S1275 is modified to Phosphoserine. The span at 1309-1318 shows a compositional bias: low complexity; sequence SSSVESSTSS. The segment covering 1325-1337 has biased composition (polar residues); sequence SSKSVTPASTLTK. The residue at position 1328 (S1328) is a Phosphoserine. T1330 carries the phosphothreonine modification. Over residues 1364-1373 the composition is skewed to pro residues; the sequence is LPPPPPPPPV. Over residues 1407 to 1440 the composition is skewed to basic and acidic residues; it reads EWKKREEHQRWYEKEKARLEEERERKRREQERKL. Positions 1410–1446 form a coiled coil; the sequence is KREEHQRWYEKEKARLEEERERKRREQERKLGQMRSQ. A compositionally biased stretch (polar residues) spans 1443–1457; it reads MRSQTLNPASFSPLA. Basic and acidic residues predominate over residues 1487-1503; it reads TIERKDLQYITISKEEL. Phosphoserine is present on residues S1499 and S1510. The segment covering 1513-1526 has biased composition (basic and acidic residues); that stretch reads PWKRDAREKLEKQQ. Residues 1523 to 1561 adopt a coiled-coil conformation; sequence EKQQQMHIVDMLSKEIHELQNKVDRTAEESDRLRKLMLE. Residues 1576 to 1587 are compositionally biased toward acidic residues; sequence EDDDEEEDDDVD. Positions 1593–1665 form a coiled coil; sequence QRLEAERRAR…SRLEAERRRQ (73 aa). Residues 1595–1675 are compositionally biased toward basic and acidic residues; that stretch reads LEAERRARMQ…HEEAARRLLE (81 aa). Phosphoserine occurs at positions 1694, 1719, 1770, and 1795. The interval 1734 to 1820 is disordered; sequence EEEDYGPAGP…TELENELNTK (87 aa). Residues 1759 to 1772 are compositionally biased toward basic and acidic residues; that stretch reads APREAREKLTRSQD. A compositionally biased stretch (basic and acidic residues) spans 1800–1820; the sequence is VSDKVKASRKLTELENELNTK. N6-acetyllysine is present on K1803.

As to quaternary structure, homodimer. Interacts with F-actin, nectin and NECTIN3. Essential for the association of nectin and E-cadherin. Isoform 2/s-afadin does not interact with F-actin. Interacts with ZO-1 and occludin, but probably in an indirect manner. Interacts with RIT1, RIT2, NRXN1 and BCR. Interacts with ADAM10; the interaction locks ADAM10 at adherens junctions following ADAM10 recruitment to adherens junctions by TSPAN33. As to expression, isoform 1 is expressed only in a restricted set of epithelial structures during early embryogenesis.

The protein localises to the cell junction. The protein resides in the adherens junction. In terms of biological role, belongs to an adhesion system, probably together with the E-cadherin-catenin system, which plays a role in the organization of homotypic, interneuronal and heterotypic cell-cell adherens junctions (AJs). Nectin- and actin-filament-binding protein that connects nectin to the actin cytoskeleton. May play a key role in the organization of epithelial structures of the embryonic ectoderm. Essential for the organization of adherens junctions. The polypeptide is Afadin (Mus musculus (Mouse)).